The sequence spans 375 residues: Succinyl-diaminopimelate desuccinylase (375 aa).

Residue His66 coordinates Zn(2+). Asp68 is a catalytic residue. Asp99 is a Zn(2+) binding site. Residue Glu133 is the Proton acceptor of the active site. Positions 134, 162, and 348 each coordinate Zn(2+).

Belongs to the peptidase M20A family. DapE subfamily. Homodimer. Zn(2+) serves as cofactor. Co(2+) is required as a cofactor.

It catalyses the reaction N-succinyl-(2S,6S)-2,6-diaminopimelate + H2O = (2S,6S)-2,6-diaminopimelate + succinate. It participates in amino-acid biosynthesis; L-lysine biosynthesis via DAP pathway; LL-2,6-diaminopimelate from (S)-tetrahydrodipicolinate (succinylase route): step 3/3. Functionally, catalyzes the hydrolysis of N-succinyl-L,L-diaminopimelic acid (SDAP), forming succinate and LL-2,6-diaminopimelate (DAP), an intermediate involved in the bacterial biosynthesis of lysine and meso-diaminopimelic acid, an essential component of bacterial cell walls. The protein is Succinyl-diaminopimelate desuccinylase of Salmonella agona (strain SL483).